The primary structure comprises 316 residues: MLKSNKVVLIGAGGVGSSFAYALTIDNSLVHELVIIDVNEDKAKGEVMDLNHGQMFLKKNINVLFGTYKDCVNADIVVITAGLNQKPGETRLDLVGKNSKIFKDIITNVVSSGFDGIFVIASNPVDIMTYVTMKYSKFPIHKVIGTGTILDTSRLRYFLSDRFNVNTQNIHSYVMGEHGDSSFVTWDETKIAMKPLSEYLSEGKITELELDEIHKKVVNAAYEVIKLKGATYYAIGLGIKNIVNAIIGDQNIILPISSYINGQYGGLIKDIYIGAPAIVCKEGVKEVLNFKISPKELEKFNNSANQLKSYIDKIEF.

Residues Val15, Asp37, Lys42, Tyr68, and 82–83 (GL) contribute to the NAD(+) site. Substrate-binding positions include Gln85, Arg91, and 123–126 (NPVD). NAD(+) is bound by residues 121-123 (ASN) and Thr146. A substrate-binding site is contributed by 151-154 (DTSR). 2 residues coordinate beta-D-fructose 1,6-bisphosphate: Arg156 and His171. Catalysis depends on His178, which acts as the Proton acceptor. Tyr222 is modified (phosphotyrosine). Thr231 lines the substrate pocket.

It belongs to the LDH/MDH superfamily. LDH family. In terms of assembly, homotetramer.

Its subcellular location is the cytoplasm. It catalyses the reaction (S)-lactate + NAD(+) = pyruvate + NADH + H(+). It functions in the pathway fermentation; pyruvate fermentation to lactate; (S)-lactate from pyruvate: step 1/1. Allosterically activated by fructose 1,6-bisphosphate (FBP). Functionally, catalyzes the conversion of lactate to pyruvate. The protein is L-lactate dehydrogenase of Borreliella afzelii (strain PKo) (Borrelia afzelii).